A 338-amino-acid chain; its full sequence is Heat-inducible transcription repressor HrcA (338 aa).

It belongs to the HrcA family.

Its function is as follows. Negative regulator of class I heat shock genes (grpE-dnaK-dnaJ and groELS operons). Prevents heat-shock induction of these operons. This is Heat-inducible transcription repressor HrcA from Bacillus cereus (strain 03BB102).